A 146-amino-acid chain; its full sequence is uncharacterized protein (146 aa).

One can recognise an HTH marR-type domain in the interval 1–137 (MLSQEFFNSF…TINVMNQIHE (137 aa)).

This is an uncharacterized protein from Staphylococcus aureus (strain N315).